Reading from the N-terminus, the 201-residue chain is Small ribosomal subunit protein uS5 (201 aa).

The interval 1–28 (MAGPQRRGSGAGGGERRDRKGRDGGASA) is disordered. Basic and acidic residues predominate over residues 14-23 (GERRDRKGRD). The S5 DRBM domain maps to 34–97 (YVERVVAINR…EEAKKNFFKV (64 aa)).

The protein belongs to the universal ribosomal protein uS5 family. In terms of assembly, part of the 30S ribosomal subunit. Contacts proteins S4 and S8.

In terms of biological role, with S4 and S12 plays an important role in translational accuracy. Located at the back of the 30S subunit body where it stabilizes the conformation of the head with respect to the body. This Streptomyces griseus subsp. griseus (strain JCM 4626 / CBS 651.72 / NBRC 13350 / KCC S-0626 / ISP 5235) protein is Small ribosomal subunit protein uS5.